A 158-amino-acid chain; its full sequence is RNA pyrophosphohydrolase (158 aa).

In terms of domain architecture, Nudix hydrolase spans 8-152 (PYRPCAGVML…KRALYRGLIE (145 aa)). The Nudix box signature appears at 42-63 (GGIDEGEDAEKAAIRELGEETG).

The protein belongs to the Nudix hydrolase family. RppH subfamily. A divalent metal cation serves as cofactor.

Its function is as follows. Accelerates the degradation of transcripts by removing pyrophosphate from the 5'-end of triphosphorylated RNA, leading to a more labile monophosphorylated state that can stimulate subsequent ribonuclease cleavage. This Sphingopyxis alaskensis (strain DSM 13593 / LMG 18877 / RB2256) (Sphingomonas alaskensis) protein is RNA pyrophosphohydrolase.